The following is a 324-amino-acid chain: Myoblast determination protein 1 homolog (324 aa).

Residues 125–146 (VDSQHEDTTTSTAGGAGVGGPR) form a disordered region. The region spanning 155–206 (DRRKAATMRERRRLRKVNEAFEVVKQRTCPNPNQRLPKVEILRSAIDYINNL) is the bHLH domain. A disordered region spans residues 251–272 (YNPENMFDDDDLTDSDDDRDHH). The span at 256-267 (MFDDDDLTDSDD) shows a compositional bias: acidic residues.

Efficient DNA binding requires dimerization with another bHLH protein. As to expression, body wall muscle cells; in clonal muscle precursors, in a set of early embryonic blastomeres (the ms-granddaughters), and in six glial-like cells called GLRS.

It localises to the nucleus. Involved in myogenesis, in cooperation with transcription factors unc-120 and hnd-1. Acts redundantly with fozi-1 to promote body wall muscle cell and coelomocyte specification in postembryonic mesoderm progenitors, probably through suppression of sem-2. The sequence is that of Myoblast determination protein 1 homolog from Caenorhabditis elegans.